The chain runs to 173 residues: Sialic acid TRAP transporter small permease protein SiaQ (173 aa).

The next 4 membrane-spanning stretches (helical) occupy residues 13–33 (IEEI…TWQI), 46–66 (SEEL…AIAI), 87–107 (LSLV…IIVL), and 123–143 (LGIS…FMVF).

Belongs to the TRAP transporter small permease family. As to quaternary structure, the complex comprises the extracytoplasmic solute receptor protein SiaP, and the two transmembrane proteins SiaQ and SiaM. SiaQ and SiaM form a tight 1:1 complex.

The protein localises to the cell inner membrane. Functionally, part of the tripartite ATP-independent periplasmic (TRAP) transport system SiaPQM that catalyzes unidirectional Na(+)-dependent sialic acid uptake. The polypeptide is Sialic acid TRAP transporter small permease protein SiaQ (Vibrio cholerae serotype O1 (strain ATCC 39315 / El Tor Inaba N16961)).